An 837-amino-acid chain; its full sequence is Neural cell adhesion molecule 2 (837 aa).

A signal peptide spans 1 to 19; that stretch reads MSLLLSFYLLGLLVSSGQA. The Extracellular portion of the chain corresponds to 20 to 697; the sequence is LLQVTISLSK…PNIIKDTLFN (678 aa). Ig-like C2-type domains follow at residues 21-108, 113-202, 208-297, 302-396, and 401-491; these read LQVT…ATVV, QKLT…RDII, PPAI…AFLQ, PHII…MYLD, and PKFI…YILA. 2 cysteine pairs are disulfide-bonded: Cys-42-Cys-93 and Cys-136-Cys-186. Residues Asn-177 and Asn-219 are each glycosylated (N-linked (GlcNAc...) asparagine). A disulfide bridge connects residues Cys-232 and Cys-281. A glycan (N-linked (GlcNAc...) asparagine) is linked at Asn-309. Cysteines 322 and 380 form a disulfide. Asn-406, Asn-419, Asn-445, Asn-474, and Asn-562 each carry an N-linked (GlcNAc...) asparagine glycan. Cys-422 and Cys-475 are disulfide-bonded. Fibronectin type-III domains are found at residues 498–591 and 593–688; these read SPYG…TLPV and EPSP…PPKP. A helical transmembrane segment spans residues 698–718; sequence GLGLGAVIGLGVAALLLILVV. The Cytoplasmic portion of the chain corresponds to 719–837; that stretch reads TDVSCFFIRQ…IQSKEDDSKA (119 aa). A compositionally biased stretch (basic and acidic residues) spans 764–785; it reads GSKEPIVEMRTEDERVTNHEDG. Residues 764–818 form a disordered region; it reads GSKEPIVEMRTEDERVTNHEDGSPVNEPNETTPLTEPEKLPLKEEDGKEALNPET. Position 765 is a phosphoserine (Ser-765). Position 780 is a phosphothreonine (Thr-780). A Phosphoserine modification is found at Ser-786. Residues 789-798 are compositionally biased toward low complexity; sequence NEPNETTPLT. The span at 799–814 shows a compositional bias: basic and acidic residues; sequence EPEKLPLKEEDGKEAL.

Expressed most strongly in adult and fetal brain.

The protein resides in the cell membrane. May play important roles in selective fasciculation and zone-to-zone projection of the primary olfactory axons. The chain is Neural cell adhesion molecule 2 (NCAM2) from Homo sapiens (Human).